The sequence spans 325 residues: Probable tRNA pseudouridine synthase B (325 aa).

The Nucleophile role is filled by aspartate 71. One can recognise a PUA domain in the interval leucine 238–methionine 313.

This sequence belongs to the pseudouridine synthase TruB family. Type 2 subfamily.

The catalysed reaction is uridine(55) in tRNA = pseudouridine(55) in tRNA. In terms of biological role, could be responsible for synthesis of pseudouridine from uracil-55 in the psi GC loop of transfer RNAs. The chain is Probable tRNA pseudouridine synthase B from Korarchaeum cryptofilum (strain OPF8).